We begin with the raw amino-acid sequence, 153 residues long: Superoxide dismutase [Cu-Zn] (153 aa).

3 residues coordinate Cu cation: His45, His47, and His62. Residues Cys56 and Cys145 are joined by a disulfide bond. Residues His62, His70, His79, and Asp82 each coordinate Zn(2+). His119 is a binding site for Cu cation.

The protein belongs to the Cu-Zn superoxide dismutase family. Homodimer. Cu cation serves as cofactor. The cofactor is Zn(2+).

The protein localises to the cytoplasm. The enzyme catalyses 2 superoxide + 2 H(+) = H2O2 + O2. Destroys radicals which are normally produced within the cells and which are toxic to biological systems. This is Superoxide dismutase [Cu-Zn] from Drosophila virilis (Fruit fly).